The primary structure comprises 199 residues: dITP/XTP pyrophosphatase (199 aa).

Residue 7 to 12 participates in substrate binding; sequence SNNRGK. Residues Asp-39 and Asp-68 each coordinate Mg(2+). The Proton acceptor role is filled by Asp-68. Substrate-binding positions include Ala-69, 154–157, Lys-177, and 182–183; these read FGFD and HR.

This sequence belongs to the HAM1 NTPase family. In terms of assembly, homodimer. Mg(2+) is required as a cofactor.

It catalyses the reaction XTP + H2O = XMP + diphosphate + H(+). It carries out the reaction dITP + H2O = dIMP + diphosphate + H(+). The catalysed reaction is ITP + H2O = IMP + diphosphate + H(+). In terms of biological role, pyrophosphatase that catalyzes the hydrolysis of nucleoside triphosphates to their monophosphate derivatives, with a high preference for the non-canonical purine nucleotides XTP (xanthosine triphosphate), dITP (deoxyinosine triphosphate) and ITP. Seems to function as a house-cleaning enzyme that removes non-canonical purine nucleotides from the nucleotide pool, thus preventing their incorporation into DNA/RNA and avoiding chromosomal lesions. The protein is dITP/XTP pyrophosphatase of Paracidovorax citrulli (strain AAC00-1) (Acidovorax citrulli).